A 243-amino-acid chain; its full sequence is Pyridoxine 5'-phosphate synthase (243 aa).

Asparagine 9 serves as a coordination point for 3-amino-2-oxopropyl phosphate. 11-12 (DH) is a binding site for 1-deoxy-D-xylulose 5-phosphate. Residue arginine 20 participates in 3-amino-2-oxopropyl phosphate binding. Histidine 45 acts as the Proton acceptor in catalysis. 1-deoxy-D-xylulose 5-phosphate-binding residues include arginine 47 and histidine 52. Glutamate 72 functions as the Proton acceptor in the catalytic mechanism. Threonine 102 contributes to the 1-deoxy-D-xylulose 5-phosphate binding site. The active-site Proton donor is histidine 193. 3-amino-2-oxopropyl phosphate-binding positions include glycine 194 and 215 to 216 (GH).

Belongs to the PNP synthase family. In terms of assembly, homooctamer; tetramer of dimers.

Its subcellular location is the cytoplasm. The enzyme catalyses 3-amino-2-oxopropyl phosphate + 1-deoxy-D-xylulose 5-phosphate = pyridoxine 5'-phosphate + phosphate + 2 H2O + H(+). The protein operates within cofactor biosynthesis; pyridoxine 5'-phosphate biosynthesis; pyridoxine 5'-phosphate from D-erythrose 4-phosphate: step 5/5. In terms of biological role, catalyzes the complicated ring closure reaction between the two acyclic compounds 1-deoxy-D-xylulose-5-phosphate (DXP) and 3-amino-2-oxopropyl phosphate (1-amino-acetone-3-phosphate or AAP) to form pyridoxine 5'-phosphate (PNP) and inorganic phosphate. The chain is Pyridoxine 5'-phosphate synthase from Shigella dysenteriae serotype 1 (strain Sd197).